A 669-amino-acid chain; its full sequence is DNA mismatch repair protein MutL (669 aa).

A compositionally biased stretch (basic and acidic residues) spans 356 to 371; sequence FEQRQNTENKQEKTFS. The segment at 356 to 379 is disordered; the sequence is FEQRQNTENKQEKTFSSEESNSKP.

This sequence belongs to the DNA mismatch repair MutL/HexB family.

This protein is involved in the repair of mismatches in DNA. It is required for dam-dependent methyl-directed DNA mismatch repair. May act as a 'molecular matchmaker', a protein that promotes the formation of a stable complex between two or more DNA-binding proteins in an ATP-dependent manner without itself being part of a final effector complex. In Staphylococcus aureus (strain MRSA252), this protein is DNA mismatch repair protein MutL.